The sequence spans 229 residues: Large ribosomal subunit protein uL1 (229 aa).

This sequence belongs to the universal ribosomal protein uL1 family. In terms of assembly, part of the 50S ribosomal subunit.

In terms of biological role, binds directly to 23S rRNA. The L1 stalk is quite mobile in the ribosome, and is involved in E site tRNA release. Functionally, protein L1 is also a translational repressor protein, it controls the translation of the L11 operon by binding to its mRNA. The protein is Large ribosomal subunit protein uL1 of Streptococcus pneumoniae (strain JJA).